Reading from the N-terminus, the 156-residue chain is Transcription elongation factor GreA (156 aa).

Positions Met1–Arg32 form a coiled coil.

Belongs to the GreA/GreB family.

Necessary for efficient RNA polymerase transcription elongation past template-encoded arresting sites. The arresting sites in DNA have the property of trapping a certain fraction of elongating RNA polymerases that pass through, resulting in locked ternary complexes. Cleavage of the nascent transcript by cleavage factors such as GreA or GreB allows the resumption of elongation from the new 3'terminus. GreA releases sequences of 2 to 3 nucleotides. The protein is Transcription elongation factor GreA of Thermotoga sp. (strain RQ2).